The following is a 219-amino-acid chain: uncharacterized protein (219 aa).

Basic and acidic residues-rich tracts occupy residues 1 to 20, 30 to 39, and 156 to 170; these read METPIEREIRRSCEREESLR, AGRELVELRV, and QEVRAVREREQELQR. The interval 1–195 is disordered; sequence METPIEREIR…PSLTASRGDG (195 aa).

It belongs to the MISP family.

This is an uncharacterized protein from Homo sapiens (Human).